The primary structure comprises 275 residues: uncharacterized protein (275 aa).

Helical transmembrane passes span 15-35 (LFLP…FLGS), 39-59 (AIMI…FGLF), and 70-90 (ILYL…VVYL). Positions 140–191 (SSKTDMDSQVAEAPQTEEGEPSVNQVPQEAGASHRVGPYQDQGLATDRNGNP) are disordered.

It localises to the mitochondrion membrane. This is an uncharacterized protein from Arabidopsis thaliana (Mouse-ear cress).